The following is a 332-amino-acid chain: Malate dehydrogenase (332 aa).

Residues 11 to 16 (GAGNVG) and aspartate 35 each bind NAD(+). Arginine 97 and arginine 103 together coordinate substrate. Residues asparagine 110 and 133–135 (VTN) contribute to the NAD(+) site. Substrate contacts are provided by asparagine 135 and arginine 166. Catalysis depends on histidine 190, which acts as the Proton acceptor.

This sequence belongs to the LDH/MDH superfamily. MDH type 3 family.

It catalyses the reaction (S)-malate + NAD(+) = oxaloacetate + NADH + H(+). Its function is as follows. Catalyzes the reversible oxidation of malate to oxaloacetate. The chain is Malate dehydrogenase from Hydrogenobaculum sp. (strain Y04AAS1).